Here is a 77-residue protein sequence, read N- to C-terminus: Acyl carrier protein (77 aa).

One can recognise a Carrier domain in the interval 1–76; that stretch reads MSLEDDVKAI…DVIKYIQERQ (76 aa). Ser36 is modified (O-(pantetheine 4'-phosphoryl)serine).

Belongs to the acyl carrier protein (ACP) family. In terms of processing, 4'-phosphopantetheine is transferred from CoA to a specific serine of apo-ACP by AcpS. This modification is essential for activity because fatty acids are bound in thioester linkage to the sulfhydryl of the prosthetic group.

The protein resides in the cytoplasm. It participates in lipid metabolism; fatty acid biosynthesis. Carrier of the growing fatty acid chain in fatty acid biosynthesis. In Chlamydia trachomatis serovar A (strain ATCC VR-571B / DSM 19440 / HAR-13), this protein is Acyl carrier protein.